Reading from the N-terminus, the 220-residue chain is Glutathione peroxidase (220 aa).

Residue U64 is part of the active site. Position 64 (U64) is a non-standard amino acid, selenocysteine.

Belongs to the glutathione peroxidase family. Post-translationally, during periods of oxidative stress, Sec-64 may react with a superoxide radical, irreversibly lose hydroselenide and be converted to dehydroalanine.

It catalyses the reaction 2 glutathione + H2O2 = glutathione disulfide + 2 H2O. Functionally, may protect the virus and component of infected cells from oxidative damage by peroxides whose formation may be stimulated by infection. This Homo sapiens (Human) protein is Glutathione peroxidase (GPX1).